The following is a 159-amino-acid chain: Large ribosomal subunit protein mL50 (159 aa).

It belongs to the mitochondrion-specific ribosomal protein mL50 family. Component of the mitochondrial ribosome large subunit (39S) which comprises a 16S rRNA and about 50 distinct proteins.

It localises to the mitochondrion. This Bos taurus (Bovine) protein is Large ribosomal subunit protein mL50 (MRPL50).